A 104-amino-acid polypeptide reads, in one-letter code: Large ribosomal subunit protein uL24 (104 aa).

The protein belongs to the universal ribosomal protein uL24 family. Part of the 50S ribosomal subunit.

Functionally, one of two assembly initiator proteins, it binds directly to the 5'-end of the 23S rRNA, where it nucleates assembly of the 50S subunit. One of the proteins that surrounds the polypeptide exit tunnel on the outside of the subunit. The polypeptide is Large ribosomal subunit protein uL24 (Escherichia coli O81 (strain ED1a)).